Reading from the N-terminus, the 484-residue chain is UDP-glucose:undecaprenyl-phosphate glucose-1-phosphate transferase (484 aa).

5 helical membrane-spanning segments follow: residues 37–57 (MVVASGLIAYRIVFGTWVPAA), 59–79 (YRVAIATTLLYSVICFALFPL), 93–113 (VVLGGAFGGVFALFAVHALIV), 122–142 (GWVGLWFVGGLVSLVAARTLL), and 299–319 (ILAVIALMGLWPLMLAIAVGV).

The protein belongs to the bacterial sugar transferase family.

Its subcellular location is the cell inner membrane. It carries out the reaction di-trans,octa-cis-undecaprenyl phosphate + UDP-alpha-D-glucose = alpha-D-glucosyl di-trans,octa-cis-undecaprenyl diphosphate + UMP. It participates in glycan biosynthesis; xanthan biosynthesis. Functionally, is the initiating enzyme for the synthesis of the exopolysaccharide xanthan. Catalyzes the transfer of the glucose-1-phosphate moiety from UDP-Glc onto the carrier lipid undecaprenyl phosphate (C55-P), forming a phosphoanhydride bond yielding to glucosyl-pyrophosphoryl-undecaprenol (Glc-PP-C55). This chain is UDP-glucose:undecaprenyl-phosphate glucose-1-phosphate transferase (gumD), found in Xanthomonas campestris pv. campestris.